Consider the following 486-residue polypeptide: Sensor protein PhoQ (486 aa).

Over 1-16 (MKKLLHLFFPLSLRVR) the chain is Cytoplasmic. Residues 17–37 (FLLATAAVVLVLSLAYGMVAL) traverse the membrane as a helical segment. Topologically, residues 38–194 (IGYSVSFDKT…LKSSYMVWSW (157 aa)) are periplasmic. Residues Asp151 and Asp152 each contribute to the a divalent metal cation site. The chain crosses the membrane as a helical span at residues 195–215 (FIYVLSANLLLVIPLLWVAAW). The 52-residue stretch at 215-266 (WWSLRPIEALAKEVRELEEHNRELLNPATTRELTSLVRNLNRLLKSERERYD) folds into the HAMP domain. Topologically, residues 216–486 (WSLRPIEALA…GRQHSAPKDE (271 aa)) are cytoplasmic. The Histidine kinase domain maps to 274 to 480 (DLTHSLKTPL…RMEVIFGRQH (207 aa)). At His277 the chain carries Phosphohistidine; by autocatalysis. Asn385 serves as a coordination point for Mg(2+). Residues 385-393 (NVLDNACKY), 415-420 (DDGPGI), and 434-446 (RVDT…GVGL) each bind ATP. Position 442 (Gln442) interacts with Mg(2+).

As to quaternary structure, homodimer.

Its subcellular location is the cell inner membrane. It carries out the reaction ATP + protein L-histidine = ADP + protein N-phospho-L-histidine.. Functionally, member of the two-component regulatory system PhoP/PhoQ involved in virulence, adaptation to low Mg(2+) environments and the control of acid resistance genes. In low periplasmic Mg(2+), PhoQ functions as a membrane-associated protein kinase that undergoes autophosphorylation and subsequently transfers the phosphate to PhoP, resulting in the expression of PhoP-activated genes (PAG) and repression of PhoP-repressed genes (PRG). In high periplasmic Mg(2+), acts as a protein phosphatase that dephosphorylates phospho-PhoP, which results in the repression of PG and may lead to expression of some PRG. This Escherichia coli O6:H1 (strain CFT073 / ATCC 700928 / UPEC) protein is Sensor protein PhoQ (phoQ).